Reading from the N-terminus, the 180-residue chain is Nucleoid-associated protein At4g30620, chloroplastic (180 aa).

The transit peptide at Met-1–Arg-48 directs the protein to the chloroplast. A disordered region spans residues Arg-45–Gln-65. Residues Gly-56–Gln-65 show a composition bias toward basic and acidic residues.

It belongs to the YbaB/EbfC family. As to quaternary structure, homodimer. Binds to the translation initiation factors TIF3E1.

It is found in the plastid. It localises to the chloroplast. In terms of biological role, binds to DNA and alters its conformation. May be involved in regulation of gene expression, nucleoid organization and DNA protection. The chain is Nucleoid-associated protein At4g30620, chloroplastic from Arabidopsis thaliana (Mouse-ear cress).